The sequence spans 440 residues: Transposon Ty1-LR2 Gag polyprotein (440 aa).

Polar residues-rich tracts occupy residues 1–23, 48–60, and 127–152; these read MESQQLSQHSPISHGSACASVTS, TKANSQQTTTPAS, and QSQFPQYPSSVGTPLSTPSPESGNTF. Disordered regions lie at residues 1 to 93, 126 to 174, and 352 to 440; these read MESQ…MMTQ, PQSQ…PPPM, and GSRN…PGTY. Over residues 153–165 the composition is skewed to low complexity; sequence TDSSSADSDMTST. An RNA-binding region spans residues 299 to 401; it reads NNGIHINNKV…NSKSKTARAH (103 aa). A compositionally biased stretch (low complexity) spans 402–418; that stretch reads NVSTSNNSPSTDNDSIS. Position 416 is a phosphoserine (Ser416). Residues 419–428 are compositionally biased toward polar residues; the sequence is KSTTEPIQLN. Positions 429–440 are enriched in basic and acidic residues; the sequence is NKHDLHLRPGTY.

Homotrimer.

Its subcellular location is the cytoplasm. Its function is as follows. Capsid protein (CA) is the structural component of the virus-like particle (VLP), forming the shell that encapsulates the retrotransposons dimeric RNA genome. The particles are assembled from trimer-clustered units and there are holes in the capsid shells that allow for the diffusion of macromolecules. CA also has nucleocapsid-like chaperone activity, promoting primer tRNA(i)-Met annealing to the multipartite primer-binding site (PBS), dimerization of Ty1 RNA and initiation of reverse transcription. The polypeptide is Transposon Ty1-LR2 Gag polyprotein (TY1A-LR2) (Saccharomyces cerevisiae (strain ATCC 204508 / S288c) (Baker's yeast)).